The primary structure comprises 191 residues: Gene BABR protein 1 (191 aa).

This chain is Gene BABR protein 1, found in Babesia bovis.